The primary structure comprises 584 residues: N(6)-adenosine-methyltransferase subunit METTL3 (584 aa).

Disordered regions lie at residues methionine 1–proline 65 and lysine 162–valine 221. Over residues arginine 187–serine 204 the composition is skewed to polar residues. The Nuclear localization signal motif lies at aspartate 213–lysine 220. Residues aspartate 381–isoleucine 382 and aspartate 399 each bind S-adenosyl-L-methionine. Residues proline 400 to threonine 414 form a gate loop 1 region. Interaction with METTL14 regions lie at residues aspartate 454–glutamate 458 and glutamine 468–lysine 484. Positions glutamine 466 to glycine 483 are interphase loop. A positively charged region required for RNA-binding region spans residues arginine 469 to histidine 482. The interval valine 511–aspartate 519 is gate loop 2. S-adenosyl-L-methionine is bound by residues lysine 517, arginine 540 to asparagine 543, and asparagine 553 to glutamine 554.

This sequence belongs to the MT-A70-like family. As to quaternary structure, heterodimer; heterodimerizes with mettl14 to form an antiparallel heterodimer that constitutes an active methyltransferase. Component of the WMM complex, a N6-methyltransferase complex composed of a catalytic subcomplex, named MAC, and of an associated subcomplex, named MACOM. The MAC subcomplex is composed of mettl3 and mettl14. Expressed in the hemato-vascular system: enriched in sorted endothelial cells and haemogenic endothelium.

The protein resides in the nucleus. It localises to the nucleus speckle. Its subcellular location is the cytoplasm. The enzyme catalyses an adenosine in mRNA + S-adenosyl-L-methionine = an N(6)-methyladenosine in mRNA + S-adenosyl-L-homocysteine + H(+). The METTL3-METTL14 heterodimer forms a N6-methyltransferase complex that methylates adenosine residues at the N(6) position of some RNAs and regulates various processes such as the circadian clock, differentiation of embryonic and hematopoietic stem cells, cortical neurogenesis, response to DNA damage, differentiation of T-cells and primary miRNA processing. In the heterodimer formed with mettl14, mettl3 constitutes the catalytic core. N6-methyladenosine (m6A), which takes place at the 5'-[AG]GAC-3' consensus sites of some mRNAs, plays a role in mRNA stability, processing and translation efficiency. M6A is also involved in hematopoietic stem cells specification: m6A methylation and subsequent destabilization of mRNAs, such as notch1a, leads to decreased Notch signaling, promoting endothelial to hematopoietic transition. M6A also takes place in other RNA molecules, such as primary miRNA (pri-miRNAs). Mediates methylation of pri-miRNAs. This chain is N(6)-adenosine-methyltransferase subunit METTL3, found in Danio rerio (Zebrafish).